Here is a 612-residue protein sequence, read N- to C-terminus: UvrABC system protein C (612 aa).

One can recognise a GIY-YIG domain in the interval 11-90; the sequence is TASGVYLMKG…IKKYRPRYNI (80 aa). Residues 200–235 form the UVR domain; that stretch reads SEVVESLQHQMAAAAERMAFEEAARLRDQLRAIEQT.

This sequence belongs to the UvrC family. Interacts with UvrB in an incision complex.

The protein localises to the cytoplasm. The UvrABC repair system catalyzes the recognition and processing of DNA lesions. UvrC both incises the 5' and 3' sides of the lesion. The N-terminal half is responsible for the 3' incision and the C-terminal half is responsible for the 5' incision. The polypeptide is UvrABC system protein C (Syntrophotalea carbinolica (strain DSM 2380 / NBRC 103641 / GraBd1) (Pelobacter carbinolicus)).